A 304-amino-acid chain; its full sequence is Thyroxine 5-deiodinase (304 aa).

The segment at 1 to 23 (MPRQATSRLVVGEGEGSQGASGP) is disordered. Topologically, residues 1 to 44 (MPRQATSRLVVGEGEGSQGASGPAATMLRSLLLHSLRLCAQTAS) are cytoplasmic. The chain crosses the membrane as a helical; Signal-anchor for type II membrane protein span at residues 45–67 (CLVLFPRFLGTAFMLWLLDFLCI). At 68 to 304 (RKHFLGRRRR…QLHGARPRRV (237 aa)) the chain is on the extracellular side. The segment at 78 to 99 (GQPEPEVELNSEGEEVPPDDPP) is disordered. Over residues 82-95 (PEVELNSEGEEVPP) the composition is skewed to acidic residues. Selenocysteine 170 is a catalytic residue. Residue selenocysteine 170 is a non-standard amino acid, selenocysteine.

This sequence belongs to the iodothyronine deiodinase family. Monomer. Homodimer. May undergo minor heretodimerization with DIO1 and DIO2. As to expression, expressed in placenta and several fetal tissues.

Its subcellular location is the cell membrane. The protein resides in the endosome membrane. It catalyses the reaction 3,3',5'-triiodo-L-thyronine + iodide + A + H(+) = L-thyroxine + AH2. The catalysed reaction is 3,3'-diiodo-L-thyronine + iodide + A + H(+) = 3,3',5-triiodo-L-thyronine + AH2. The enzyme catalyses 3-iodo-L-thyronine + iodide + A + H(+) = 3,5-diiodo-L-thyronine + AH2. It carries out the reaction L-thyronine + iodide + A + H(+) = 3-iodo-L-thyronine + AH2. It catalyses the reaction 3',5'-diiodo-L-thyronine + iodide + A + H(+) = 3,3',5'-triiodo-L-thyronine + AH2. The catalysed reaction is 3'-iodo-L-thyronine + iodide + A + H(+) = 3,3'-diiodo-L-thyronine + AH2. The enzyme catalyses 3,3',5'-triiodothyronamine + iodide + A + H(+) = 3,3',5,5'-tetraiodothyronamine + AH2. It carries out the reaction 3',5'-diiodothyronamine + iodide + A + H(+) = 3,3',5'-triiodothyronamine + AH2. It catalyses the reaction 3,3'-diiodothyronamine + iodide + A + H(+) = 3,3',5-triiodothyronamine + AH2. The catalysed reaction is 3-iodothyronamine + iodide + A + H(+) = 3,5-diiodothyronamine + AH2. The enzyme catalyses 3'-iodothyronamine + iodide + A + H(+) = 3,3'-diiodothyronamine + AH2. It carries out the reaction thyronamine + iodide + A + H(+) = 3-iodothyronamine + AH2. Functionally, plays a crucial role in the metabolism of thyroid hormones (TH) and has specific roles in TH activation and inactivation by deiodination. Catalyzes the deiodination of L-thyroxine (T4) to 3,3',5'-triiodothyronine (rT3), 3,5,3'-triiodothyronine (T3) to 3,3'-diiodothyronine (3,3'-T2), 3,5-diiodothyronine (3,5-T2) to 3-monoiodothyronine (3-T1), rT3 to 3',5'-diiodothyronine (3',5'-T2) and 3,3'-T2 to 3'-monoiodothyronine (3'-T1) via inner-ring deiodination (IRD). Catalyzes the deiodination of 3-T1 to L-thyronine (T0) via outer-ring deiodination (ORD). Catalyzes the tyrosyl ring deiodinations of 3,3',5,5'-tetraiodothyronamine, 3,3',5'-triiodothyronamine, 3,5,3'-triiodothyronamine, 3,5-diiodothyronamine, 3,3'-diiodothyronamine and 3-iodothyronamine. The protein is Thyroxine 5-deiodinase (DIO3) of Homo sapiens (Human).